The chain runs to 229 residues: Large ribosomal subunit protein uL1 (229 aa).

It belongs to the universal ribosomal protein uL1 family. In terms of assembly, part of the 50S ribosomal subunit.

Binds directly to 23S rRNA. The L1 stalk is quite mobile in the ribosome, and is involved in E site tRNA release. Functionally, protein L1 is also a translational repressor protein, it controls the translation of the L11 operon by binding to its mRNA. This Streptococcus sanguinis (strain SK36) protein is Large ribosomal subunit protein uL1.